We begin with the raw amino-acid sequence, 238 residues long: Formate dehydrogenase, cytochrome b556 subunit (238 aa).

Positions 23 and 62 each coordinate heme b. 4 helical membrane passes run 23 to 43 (HWML…FFFP), 60 to 80 (AIHP…ALLY), 120 to 140 (MLFW…IIMW), and 155 to 175 (IAIL…LVHI). The heme b site is built by His160 and His174.

This sequence belongs to the formate dehydrogenase gamma subunit family. In terms of assembly, formate dehydrogenase is a membrane-bound complex, formed by subunits alpha, beta and gamma. Requires heme as cofactor.

It localises to the cell membrane. In terms of biological role, allows to use formate as major electron donor during anaerobic respiration. Subunit gamma is probably the cytochrome b556(FDO) component of the formate dehydrogenase. This chain is Formate dehydrogenase, cytochrome b556 subunit (fdxI), found in Haemophilus influenzae (strain ATCC 51907 / DSM 11121 / KW20 / Rd).